Reading from the N-terminus, the 151-residue chain is Ribosomal RNA large subunit methyltransferase H (151 aa).

Residues Ala-101 and 119–124 (LSEMTF) contribute to the S-adenosyl-L-methionine site.

This sequence belongs to the RNA methyltransferase RlmH family. Homodimer.

The protein resides in the cytoplasm. The catalysed reaction is pseudouridine(1915) in 23S rRNA + S-adenosyl-L-methionine = N(3)-methylpseudouridine(1915) in 23S rRNA + S-adenosyl-L-homocysteine + H(+). Functionally, specifically methylates the pseudouridine at position 1915 (m3Psi1915) in 23S rRNA. The protein is Ribosomal RNA large subunit methyltransferase H of Helicobacter pylori (strain G27).